A 180-amino-acid polypeptide reads, in one-letter code: ATP synthase subunit b 2 (180 aa).

The chain crosses the membrane as a helical span at residues 33–53; the sequence is IFWLLVTLVAIYFLLTRVALP.

The protein belongs to the ATPase B chain family. In terms of assembly, F-type ATPases have 2 components, F(1) - the catalytic core - and F(0) - the membrane proton channel. F(1) has five subunits: alpha(3), beta(3), gamma(1), delta(1), epsilon(1). F(0) has three main subunits: a(1), b(2) and c(10-14). The alpha and beta chains form an alternating ring which encloses part of the gamma chain. F(1) is attached to F(0) by a central stalk formed by the gamma and epsilon chains, while a peripheral stalk is formed by the delta and b chains.

Its subcellular location is the cell inner membrane. Its function is as follows. F(1)F(0) ATP synthase produces ATP from ADP in the presence of a proton or sodium gradient. F-type ATPases consist of two structural domains, F(1) containing the extramembraneous catalytic core and F(0) containing the membrane proton channel, linked together by a central stalk and a peripheral stalk. During catalysis, ATP synthesis in the catalytic domain of F(1) is coupled via a rotary mechanism of the central stalk subunits to proton translocation. In terms of biological role, component of the F(0) channel, it forms part of the peripheral stalk, linking F(1) to F(0). The b'-subunit is a diverged and duplicated form of b found in plants and photosynthetic bacteria. This Cereibacter sphaeroides (strain ATCC 17025 / ATH 2.4.3) (Rhodobacter sphaeroides) protein is ATP synthase subunit b 2 (atpF2).